The primary structure comprises 704 residues: Histone-lysine N-methyltransferase, H3 lysine-9 specific SUVH1 (704 aa).

Disordered stretches follow at residues 1–21 (MEQGLRSDGNNPPSIDKTRVL) and 68–176 (PFVA…QAEG). 2 stretches are compositionally biased toward polar residues: residues 80 to 90 (ESSQQTPSGVP) and 109 to 121 (SFRTPTTANGNSG). The segment covering 159-170 (GKKRGRPKKPRR) has biased composition (basic residues). The 148-residue stretch at 265-412 (GNAPGIEVGD…CNVFKYKLLR (148 aa)) folds into the YDG domain. The 62-residue stretch at 487 to 548 (PSCHCVGGCQ…NCRNRMSQGG (62 aa)) folds into the Pre-SET domain. Residues Cys-489, Cys-491, Cys-495, Cys-502, Cys-504, Cys-530, Cys-534, Cys-536, and Cys-540 each coordinate Zn(2+). Positions 551 to 681 (ARLEVFKTKN…PMQELTFDYG (131 aa)) constitute an SET domain. S-adenosyl-L-methionine is bound by residues 561-563 (RGW), Asp-593, Tyr-595, Arg-635, and 638-639 (NH). Zn(2+) contacts are provided by Cys-641, Cys-692, Cys-694, and Cys-699. Residues 688–704 (RRKKCLCGSLNCRGYFY) form the Post-SET domain.

This sequence belongs to the class V-like SAM-binding methyltransferase superfamily. Histone-lysine methyltransferase family. Suvar3-9 subfamily. In terms of assembly, interacts with LHP1. In terms of tissue distribution, expressed in roots, stems, leaves and flowers.

Its subcellular location is the nucleus. The protein resides in the chromosome. It carries out the reaction N(6)-methyl-L-lysyl(27)-[histone H3] + S-adenosyl-L-methionine = N(6),N(6)-dimethyl-L-lysyl(27)-[histone H3] + S-adenosyl-L-homocysteine + H(+). The catalysed reaction is L-lysyl(9)-[histone H3] + 2 S-adenosyl-L-methionine = N(6),N(6)-dimethyl-L-lysyl(9)-[histone H3] + 2 S-adenosyl-L-homocysteine + 2 H(+). The enzyme catalyses L-lysyl(27)-[histone H3] + S-adenosyl-L-methionine = N(6)-methyl-L-lysyl(27)-[histone H3] + S-adenosyl-L-homocysteine + H(+). Functionally, histone methyltransferase. Methylates in vitro both 'Lys-9' and 'Lys-27' of histone H3. Required for in vivo dimethylation of 'Lys-9'. H3 'Lys-9' methylation represents a specific tag for epigenetic control for plant development and transcriptional repression. The sequence is that of Histone-lysine N-methyltransferase, H3 lysine-9 specific SUVH1 (SUVH1) from Nicotiana tabacum (Common tobacco).